Reading from the N-terminus, the 306-residue chain is Phenylcoumaran benzylic ether reductase IRL1 (306 aa).

NADP(+) contacts are provided by residues 10–16 (GATGYIG), Arg-35, and Lys-44. The active-site Proton acceptor is the Lys-132. Arg-136 is a binding site for NADP(+).

It belongs to the NmrA-type oxidoreductase family. Isoflavone reductase subfamily. Highly expressed in sclerotesta. Expressed in roots, and two-to-four year stems.

It carries out the reaction (-)-dehydrodiconiferyl alcohol + NADPH + H(+) = (S)-isodihydrodehydrodiconiferyl alcohol + NADP(+). It catalyses the reaction (+)-dehydrodiconiferyl alcohol + NADPH + H(+) = (R)-isodihydrodehydrodiconiferyl alcohol + NADP(+). The catalysed reaction is (2R,3S)-dihydrodehydrodiconiferyl alcohol + NADPH + H(+) = (S)-tetrahydrodehydrodiconiferyl alcohol + NADP(+). The enzyme catalyses (2S,3R)-dihydrodehydrodiconiferyl alcohol + NADPH + H(+) = (R)-tetrahydrodehydrodiconiferyl alcohol + NADP(+). Its function is as follows. Oxidoreductase involved in lignan biosynthesis. Catalyzes the NADPH-dependent reduction of phenylcoumaran benzylic ethers. Converts dehydrodiconiferyl alcohol (DDC) to isodihydrodehydrodiconiferyl alcohol (IDDDC), and dihydrodehydrodiconiferyl alcohol (DDDC) to tetrahydrodehydrodiconiferyl alcohol (TDDC). May regulate changes in lignin content and accumulation of flavonoids. This chain is Phenylcoumaran benzylic ether reductase IRL1, found in Ginkgo biloba (Ginkgo).